Reading from the N-terminus, the 451-residue chain is Cysteine desulfurase (451 aa).

Residues A121, T122, Q229, S249, and H251 each contribute to the pyridoxal 5'-phosphate site. At K252 the chain carries N6-(pyridoxal phosphate)lysine. T289 serves as a coordination point for pyridoxal 5'-phosphate. C375 serves as the catalytic Cysteine persulfide intermediate. Position 375 (C375) interacts with [2Fe-2S] cluster. Residue C375 coordinates Zn(2+). A Cysteine persulfide modification is found at C375.

It belongs to the class-V pyridoxal-phosphate-dependent aminotransferase family. NifS/IscS subfamily. Homodimer. Component of the mitochondrial core iron-sulfur cluster (ISC) complex composed of NFS1, LYRM4, NDUFAB1, ISCU, FXN, and FDX2; this complex is a heterohexamer containing two copies of each monomer. Component of cyteine desulfurase complex composed of NFS1, LYRM4 and NDUFAB1; this complex contributes to the activation of cysteine desulfurase activity and NFS1 stabilization. Interacts (homodimer form) with ISCU (D-state); each monomer interacts with the C-terminal regions of each NFS1 monomer. Interacts with HSPA9. Interacts (via homodimer form) with FDX2. Interacts (via homodimer form) with FXN. Interacts with LYRM4. Component of a complex composed of FXN, NFS1, LYRM4 and ISCU. In terms of assembly, monomer. Homodimer. Oligomer. Interacts with ISCU. Component of the cysteine desulfurase complex composed of NFS1 and LYRM4; this complex contributes to the activation of cysteine desulfurase activity. Interacts with MOCS3. Requires pyridoxal 5'-phosphate as cofactor. Post-translationally, N-gluconoylated. Cysteine persulfide intermediate is reduced by thiol-containing molecules like glutathione and L-cysteine. Persulfide reduction is a rate-limiting step of cysteine desulfurase catalytic cycle.

The protein resides in the mitochondrion. It localises to the cytoplasm. It is found in the nucleus. Its subcellular location is the cytoskeleton. The protein localises to the microtubule organizing center. The protein resides in the centrosome. The catalysed reaction is (sulfur carrier)-H + L-cysteine = (sulfur carrier)-SH + L-alanine. The enzyme catalyses L-cysteinyl-[cysteine desulfurase] + L-cysteine = S-sulfanyl-L-cysteinyl-[cysteine desulfurase] + L-alanine. Its activity is regulated as follows. Active only in complex with LYRM4. In terms of biological role, cysteine desulfurase, of the core iron-sulfur cluster (ISC) assembly complex, that catalyzes the desulfuration of L-cysteine to L-alanine, as component of the cysteine desulfurase complex leading to the formation of a cysteine persulfide intermediate at the active site cysteine residue and participates in the [2Fe-2S] clusters assembly on the scaffolding protein ISCU. The persulfide is then transferred on the flexible Cys loop from the catalytic site of NFS1 to the surface of NFS1. After the NFS1-linked persulfide sulfur is transferred to one of the conserved Cys residues of the scaffold, a reaction assisted by FXN. The core iron-sulfur cluster (ISC) assembly complex is involved in the de novo synthesis of a [2Fe-2S] cluster, the first step of the mitochondrial iron-sulfur protein biogenesis. This process is initiated by the cysteine desulfurase complex (NFS1:LYRM4:NDUFAB1) that produces persulfide which is delivered on the scaffold protein ISCU in a FXN-dependent manner. Then this complex is stabilized by FDX2 which provides reducing equivalents to accomplish the [2Fe-2S] cluster assembly. Finally, the [2Fe-2S] cluster is transferred from ISCU to chaperone proteins, including HSCB, HSPA9 and GLRX5. May catalyze the desulfuration of L-cysteine to L-alanine as component of the cysteine desulfurase complex (NFS1:LYRM4), leading to the formation of a cysteine persulfide intermediate. Acts as a sulfur donor for MOCS3 by transferring the sulfur of the cysteine persulfide intermediate on MOCS3. This Rattus norvegicus (Rat) protein is Cysteine desulfurase.